Consider the following 478-residue polypeptide: Cobyric acid synthase (478 aa).

The region spanning 250-437 is the GATase cobBQ-type domain; sequence QLRVVVPVLP…VHGVFDHPMH (188 aa). The active-site Nucleophile is Cys331. His429 is an active-site residue.

It belongs to the CobB/CobQ family. CobQ subfamily.

It functions in the pathway cofactor biosynthesis; adenosylcobalamin biosynthesis. Catalyzes amidations at positions B, D, E, and G on adenosylcobyrinic A,C-diamide. NH(2) groups are provided by glutamine, and one molecule of ATP is hydrogenolyzed for each amidation. In Xanthomonas euvesicatoria pv. vesicatoria (strain 85-10) (Xanthomonas campestris pv. vesicatoria), this protein is Cobyric acid synthase.